The sequence spans 421 residues: Testin (421 aa).

The PET domain occupies 92–199 (MILTNPVAAK…GDVKLPQEMD (108 aa)). LIM zinc-binding domains are found at residues 234-297 (YSCY…CDSE), 299-359 (PRCA…NHAV), and 362-421 (QGCH…KMMS).

The protein belongs to the prickle / espinas / testin family. As to quaternary structure, interacts via LIM domain 1 with ZYX. Interacts (via LIM domain 3) with ENAH and VASP. Interacts with ALKBH4, talin, actin, alpha-actinin, GRIP1 and PXN. Interacts (via LIM domain 2) with ACTL7A (via N-terminus). Heterodimer with ACTL7A; the heterodimer interacts with ENAH to form a heterotrimer.

Its subcellular location is the cytoplasm. The protein resides in the cell junction. It is found in the focal adhesion. Functionally, scaffold protein that may play a role in cell adhesion, cell spreading and in the reorganization of the actin cytoskeleton. Plays a role in the regulation of cell proliferation. May act as a tumor suppressor. This chain is Testin (TES), found in Loxodonta africana (African elephant).